We begin with the raw amino-acid sequence, 91 residues long: Small ribosomal subunit protein uS19 (91 aa).

It belongs to the universal ribosomal protein uS19 family.

Functionally, protein S19 forms a complex with S13 that binds strongly to the 16S ribosomal RNA. The polypeptide is Small ribosomal subunit protein uS19 (Synechococcus elongatus (strain ATCC 33912 / PCC 7942 / FACHB-805) (Anacystis nidulans R2)).